The sequence spans 681 residues: DNA ligase (681 aa).

NAD(+) contacts are provided by residues 35 to 39 (DAEYD), 84 to 85 (SI), and Glu-121. Residue Lys-123 is the N6-AMP-lysine intermediate of the active site. NAD(+) is bound by residues Arg-144, Glu-180, Lys-300, and Lys-324. Residues Cys-418, Cys-421, Cys-436, and Cys-442 each coordinate Zn(2+). A BRCT domain is found at 601-681 (AADGPASGKT…GLRRLLEQPA (81 aa)).

Belongs to the NAD-dependent DNA ligase family. LigA subfamily. It depends on Mg(2+) as a cofactor. Mn(2+) serves as cofactor.

It carries out the reaction NAD(+) + (deoxyribonucleotide)n-3'-hydroxyl + 5'-phospho-(deoxyribonucleotide)m = (deoxyribonucleotide)n+m + AMP + beta-nicotinamide D-nucleotide.. Functionally, DNA ligase that catalyzes the formation of phosphodiester linkages between 5'-phosphoryl and 3'-hydroxyl groups in double-stranded DNA using NAD as a coenzyme and as the energy source for the reaction. It is essential for DNA replication and repair of damaged DNA. The sequence is that of DNA ligase from Aromatoleum aromaticum (strain DSM 19018 / LMG 30748 / EbN1) (Azoarcus sp. (strain EbN1)).